A 147-amino-acid chain; its full sequence is Hemoglobin subunit epsilon (147 aa).

The Globin domain maps to 3–147 (HFTAEEKATI…VATALAHKYH (145 aa)). Ser14 and Ser51 each carry phosphoserine. Residues His64 and His93 each coordinate heme b.

This sequence belongs to the globin family. In terms of assembly, heterotetramer of two alpha chains and two epsilon chains in early embryonic hemoglobin Gower-2; two zeta chains and two epsilon chains in early embryonic hemoglobin Gower-1. Red blood cells.

Its function is as follows. The epsilon chain is a beta-type chain of early mammalian embryonic hemoglobin. The polypeptide is Hemoglobin subunit epsilon (HBE1) (Daubentonia madagascariensis (Aye-aye)).